An 810-amino-acid polypeptide reads, in one-letter code: Lon protease (810 aa).

In terms of domain architecture, Lon N-terminal spans Leu32 to Thr226. Gly376–Thr383 is an ATP binding site. The region spanning Lys612 to Glu791 is the Lon proteolytic domain. Active-site residues include Ser697 and Lys740.

Belongs to the peptidase S16 family. In terms of assembly, homohexamer. Organized in a ring with a central cavity.

It localises to the cytoplasm. The enzyme catalyses Hydrolysis of proteins in presence of ATP.. Its function is as follows. ATP-dependent serine protease that mediates the selective degradation of mutant and abnormal proteins as well as certain short-lived regulatory proteins. Required for cellular homeostasis and for survival from DNA damage and developmental changes induced by stress. Degrades polypeptides processively to yield small peptide fragments that are 5 to 10 amino acids long. Binds to DNA in a double-stranded, site-specific manner. The chain is Lon protease from Fervidobacterium nodosum (strain ATCC 35602 / DSM 5306 / Rt17-B1).